We begin with the raw amino-acid sequence, 1863 residues long: 5'-3' DNA helicase ZGRF1 (1863 aa).

Disordered stretches follow at residues 78 to 110 (SRAVEPDGSREALESGSRTLVSSSRSLGCQPSG), 132 to 196 (ENSE…PLSL), and 300 to 349 (TQSI…PEAQ). A compositionally biased stretch (basic and acidic residues) spans 81 to 90 (VEPDGSREAL). Residues 92–105 (SGSRTLVSSSRSLG) show a composition bias toward low complexity. 2 stretches are compositionally biased toward polar residues: residues 173 to 185 (PVSTDNQSPITFS) and 300 to 321 (TQSIGNLRCEQQSENPTRTTSR). Residues Ser-331 and Ser-445 each carry the phosphoserine modification. Disordered stretches follow at residues 460 to 496 (PVSPLPEIGHKQTEVEASLSTSSRISDDIADMGSKSN), 524 to 545 (TSDTDEASQEDSRLSQDSERWE), and 610 to 664 (GDVK…GVSP). The segment covering 533–545 (EDSRLSQDSERWE) has biased composition (basic and acidic residues). Positions 1111, 1113, 1136, and 1144 each coordinate Zn(2+). Residues 1111 to 1153 (CHHNQPAKLVMVKKEGPNKGRLFYTCDKSKDNQCKFFKWLEEV) form a GRF-type zinc finger.

Interacts with DNA repair protein RAD51; the interaction promotes RAD51 strand exchange activity. Also interacts with DNA repair proteins EXO1 and BRCA1; the interactions are increased following DNA damage induction.

Its subcellular location is the nucleus. It carries out the reaction ATP + H2O = ADP + phosphate + H(+). The enzyme catalyses Couples ATP hydrolysis with the unwinding of duplex DNA at the replication fork by translocating in the 5'-3' direction. This creates two antiparallel DNA single strands (ssDNA). The leading ssDNA polymer is the template for DNA polymerase III holoenzyme which synthesizes a continuous strand.. Functionally, 5'-3' DNA helicase which is recruited to sites of DNA damage and promotes repair of replication-blocking DNA lesions through stimulation of homologous recombination (HR). Promotes HR by directly stimulating RAD51-mediated strand exchange activity. Not required to load RAD51 at sites of DNA damage but promotes recombinational repair after RAD51 recruitment. Also promotes HR by positively regulating EXO1-mediated DNA end resection of DNA double-strand breaks. Required for recruitment of replication protein RPA2 to DNA damage sites. Promotes the initiation of the G2/M checkpoint but not its maintenance. Catalyzes Holliday junction branch migration and dissociation of D-loops and DNA flaps. The sequence is that of 5'-3' DNA helicase ZGRF1 (Zgrf1) from Mus musculus (Mouse).